A 516-amino-acid polypeptide reads, in one-letter code: rRNA N(6)-adenosine-methyltransferase ZCCHC4 (516 aa).

Residues cysteine 40, histidine 42, cysteine 66, cysteine 75, cysteine 127, cysteine 130, histidine 142, and histidine 145 each coordinate Zn(2+). The GRF-type zinc-finger motif lies at 40–84 (CPHELGPTLLFVKVNQGKEETRRFYACSACRDRKDCNFFQWEDEK). S-adenosyl-L-methionine contacts are provided by residues 174-177 (QYLF), arginine 204, aspartate 227, 245-246 (NM), and aspartate 278. The interval 339 to 360 (QVVDYDNHALYKHGKTGRKQSP) is regulatory loop. Positions 383, 386, 396, 397, 400, 403, 413, 414, 417, 420, 427, 428, 431, 434, 439, and 441 each coordinate Zn(2+). The DHHC domain occupies 398–448 (EHCNSCTSKDGRKWNHCFLCKKCVKPSWIHCSICNHCALPDHSCKGPKDGC). Residues 446 to 463 (DGCFICGELDHKRSACPN) form a CCHC-type zinc finger. Over residues 472–484 (KAVRKQKQRKSNK) the composition is skewed to basic residues. The disordered stretch occupies residues 472–516 (KAVRKQKQRKSNKMKMETTKGQSMNHTSATRKKKRRERTHQYLCS). Over residues 490–499 (TKGQSMNHTS) the composition is skewed to polar residues. The span at 500–509 (ATRKKKRRER) shows a compositional bias: basic residues.

This sequence belongs to the ZCCHC4 family. In terms of assembly, interacts with components of the ASC-1 complex TRIP4, ASCC1, ASCC2 and ASCC3. Interact with AHCYL1 and AHCYL2. Interact with YTHDC2.

Its subcellular location is the cytoplasm. The protein resides in the nucleus. The protein localises to the nucleolus. It catalyses the reaction adenosine(4220) in 28S rRNA + S-adenosyl-L-methionine = N(6)-methyladenosine(4220) in 28S rRNA + S-adenosyl-L-homocysteine + H(+). Functionally, rRNA N6-methyltransferase that specifically methylates the adenine in position 4220 of 28S rRNA. N6-methylation of adenine(4220) in 28S rRNA is required for translation. The protein is rRNA N(6)-adenosine-methyltransferase ZCCHC4 of Bos taurus (Bovine).